Consider the following 381-residue polypeptide: 1-deoxy-D-xylulose 5-phosphate reductoisomerase (381 aa).

The NADPH site is built by Thr-10, Gly-11, Ser-12, Ile-13, Gly-36, Lys-37, Asn-38, and Asn-120. 1-deoxy-D-xylulose 5-phosphate is bound at residue Lys-121. Glu-122 lines the NADPH pocket. Mn(2+) is bound at residue Asp-146. 1-deoxy-D-xylulose 5-phosphate contacts are provided by Ser-147, Glu-148, Ser-172, and His-195. Glu-148 serves as a coordination point for Mn(2+). Gly-201 is a binding site for NADPH. 1-deoxy-D-xylulose 5-phosphate is bound by residues Ser-208, Asn-213, Lys-214, and Glu-217. Glu-217 contacts Mn(2+).

Belongs to the DXR family. Requires Mg(2+) as cofactor. Mn(2+) is required as a cofactor.

It carries out the reaction 2-C-methyl-D-erythritol 4-phosphate + NADP(+) = 1-deoxy-D-xylulose 5-phosphate + NADPH + H(+). It functions in the pathway isoprenoid biosynthesis; isopentenyl diphosphate biosynthesis via DXP pathway; isopentenyl diphosphate from 1-deoxy-D-xylulose 5-phosphate: step 1/6. In terms of biological role, catalyzes the NADPH-dependent rearrangement and reduction of 1-deoxy-D-xylulose-5-phosphate (DXP) to 2-C-methyl-D-erythritol 4-phosphate (MEP). This is 1-deoxy-D-xylulose 5-phosphate reductoisomerase from Lysinibacillus sphaericus (strain C3-41).